We begin with the raw amino-acid sequence, 542 residues long: CTP synthase (542 aa).

The interval 1 to 265 (MARYVFITGG…DNEVLAAFGI (265 aa)) is amidoligase domain. A CTP-binding site is contributed by S13. Residue S13 participates in UTP binding. ATP contacts are provided by residues 14-19 (SLGKGI) and D71. D71 and E139 together coordinate Mg(2+). CTP is bound by residues 146 to 148 (DIE), 186 to 191 (KTKPTQ), and K222. Residues 186-191 (KTKPTQ) and K222 each bind UTP. The region spanning 291-541 (TIAIVGKYTG…IEAALEQSRL (251 aa)) is the Glutamine amidotransferase type-1 domain. Residue G353 participates in L-glutamine binding. C380 functions as the Nucleophile; for glutamine hydrolysis in the catalytic mechanism. L-glutamine is bound by residues 381 to 384 (FGMQ), E404, and R469. Active-site residues include H514 and E516.

The protein belongs to the CTP synthase family. Homotetramer.

It catalyses the reaction UTP + L-glutamine + ATP + H2O = CTP + L-glutamate + ADP + phosphate + 2 H(+). It carries out the reaction L-glutamine + H2O = L-glutamate + NH4(+). The enzyme catalyses UTP + NH4(+) + ATP = CTP + ADP + phosphate + 2 H(+). It participates in pyrimidine metabolism; CTP biosynthesis via de novo pathway; CTP from UDP: step 2/2. With respect to regulation, allosterically activated by GTP, when glutamine is the substrate; GTP has no effect on the reaction when ammonia is the substrate. The allosteric effector GTP functions by stabilizing the protein conformation that binds the tetrahedral intermediate(s) formed during glutamine hydrolysis. Inhibited by the product CTP, via allosteric rather than competitive inhibition. Functionally, catalyzes the ATP-dependent amination of UTP to CTP with either L-glutamine or ammonia as the source of nitrogen. Regulates intracellular CTP levels through interactions with the four ribonucleotide triphosphates. The polypeptide is CTP synthase (Rhizobium meliloti (strain 1021) (Ensifer meliloti)).